A 414-amino-acid polypeptide reads, in one-letter code: Protein SOSEKI 2 (414 aa).

The interval 44–135 (RRVQVVYYLT…YVLKGSEITD (92 aa)) is DIX-like oligomerization domain. Residues 171–273 (SFDDAELYVG…GDPVEPGSGR (103 aa)) form a disordered region. Over residues 173-192 (DDAELYVGEEEEEEDGEYEL) the composition is skewed to acidic residues. Residues 205 to 229 (PQSRCSRGVSTETMESTEQKPNLTK) show a composition bias toward polar residues. Over residues 230–242 (TEQDLQVRSDSSD) the composition is skewed to basic and acidic residues. The short motif at 283-284 (CG) is the Association to cell membranes element.

The protein belongs to the SOSEKI family. In terms of assembly, homodimer. Forms long polymer filaments with other SOKs proteins polymers (e.g. SOK1, SOK2, SOK3 and SOK4) crucial for polar localization and biological activity. Binds to ANGUSTIFOLIA (AN). As to expression, expressed during embryogenesis and in roots.

Its subcellular location is the cell membrane. Part of a three-gene cluster containing FLC, UFC and DFC, which is coordinately regulated in response to vernalization. Also regulated by FLX. SOSEKI proteins (SOK1-5) locally interpret global polarity cues and can influence cell division orientation to coordinate cell polarization relative to body axes, probably by guiding ANGUSTIFOLIA (AN) polarized localization. This is Protein SOSEKI 2 from Arabidopsis thaliana (Mouse-ear cress).